We begin with the raw amino-acid sequence, 509 residues long: Hexokinase-4, chloroplastic (509 aa).

A chloroplast-targeting transit peptide spans 1–37; that stretch reads MSAAAAIASPIPAAIAVVQQQRRGRSRGGGSGAAAVR. The Hexokinase domain occupies 45 to 496; the sequence is SAIAPILADL…SGIGAALLAA (452 aa). A hexokinase small subdomain region spans residues 100–238; that stretch reads TGNETGLFYA…GLDMRVSALV (139 aa). Residues Gly114, Thr115, and Asn116 each contribute to the ADP site. D-glucose contacts are provided by Thr204, Lys205, Asn239, and Asp240. Residues 239 to 485 form a hexokinase large subdomain region; sequence NDTVGTLAGA…NRIAIEHTKD (247 aa). Position 263 (Thr263) interacts with ADP. The D-glucose site is built by Asn266, Glu294, and Glu324. Residue Gly450 participates in ADP binding.

Belongs to the hexokinase family. In terms of tissue distribution, expressed in roots, leaves, flowers, immature seeds, endosperm and seed coat.

Its subcellular location is the plastid. It localises to the chloroplast stroma. The catalysed reaction is a D-hexose + ATP = a D-hexose 6-phosphate + ADP + H(+). The enzyme catalyses D-fructose + ATP = D-fructose 6-phosphate + ADP + H(+). It catalyses the reaction D-glucose + ATP = D-glucose 6-phosphate + ADP + H(+). The protein operates within carbohydrate metabolism; hexose metabolism. Its pathway is carbohydrate degradation; glycolysis; D-glyceraldehyde 3-phosphate and glycerone phosphate from D-glucose: step 1/4. Functionally, fructose and glucose phosphorylating enzyme. The protein is Hexokinase-4, chloroplastic (HXK4) of Oryza sativa subsp. japonica (Rice).